We begin with the raw amino-acid sequence, 129 residues long: Small ribosomal subunit protein uS11 (129 aa).

It belongs to the universal ribosomal protein uS11 family. As to quaternary structure, part of the 30S ribosomal subunit. Interacts with proteins S7 and S18. Binds to IF-3.

Functionally, located on the platform of the 30S subunit, it bridges several disparate RNA helices of the 16S rRNA. Forms part of the Shine-Dalgarno cleft in the 70S ribosome. This chain is Small ribosomal subunit protein uS11, found in Sphingopyxis alaskensis (strain DSM 13593 / LMG 18877 / RB2256) (Sphingomonas alaskensis).